Here is a 191-residue protein sequence, read N- to C-terminus: MTRIKSAVAAGGRRAPHSARLGSASTRTIGAVLAALLMTHDAGAAEPIIGQASVIDGDTIEIAGERVQLNSVDAPEEWQVCLDERGADYRCGKESASALDAFLSASRPTRCEFAGRDRYGRFVGTCFRADGKDVNRWLIESGNAVDRDTDNKGLYASAQQTAKSNGAGIWRAQPEHACAARVGRVNRKPSC.

The tract at residues M1–L21 is disordered.

It functions in the pathway glycan metabolism; exopolysaccharide biosynthesis. This Rhizobium meliloti (strain 1021) (Ensifer meliloti) protein is Succinoglycan biosynthesis protein ExoI (exoI).